Consider the following 248-residue polypeptide: UDP-2,3-diacylglucosamine hydrolase (248 aa).

Residues D8, H10, D41, N79, and H114 each coordinate Mn(2+). 79–80 contacts substrate; the sequence is NR. D122, S160, D171, and H202 together coordinate substrate. Residues H202 and H204 each coordinate Mn(2+).

This sequence belongs to the LpxH family. Mn(2+) is required as a cofactor.

It localises to the cell inner membrane. The catalysed reaction is UDP-2-N,3-O-bis[(3R)-3-hydroxytetradecanoyl]-alpha-D-glucosamine + H2O = 2-N,3-O-bis[(3R)-3-hydroxytetradecanoyl]-alpha-D-glucosaminyl 1-phosphate + UMP + 2 H(+). The protein operates within glycolipid biosynthesis; lipid IV(A) biosynthesis; lipid IV(A) from (3R)-3-hydroxytetradecanoyl-[acyl-carrier-protein] and UDP-N-acetyl-alpha-D-glucosamine: step 4/6. Functionally, hydrolyzes the pyrophosphate bond of UDP-2,3-diacylglucosamine to yield 2,3-diacylglucosamine 1-phosphate (lipid X) and UMP by catalyzing the attack of water at the alpha-P atom. Involved in the biosynthesis of lipid A, a phosphorylated glycolipid that anchors the lipopolysaccharide to the outer membrane of the cell. This chain is UDP-2,3-diacylglucosamine hydrolase, found in Stenotrophomonas maltophilia (strain R551-3).